A 313-amino-acid chain; its full sequence is UbiA prenyltransferase claS (313 aa).

2 helical membrane passes run 30 to 52 (FAGT…RALL) and 57 to 79 (TFGT…GCIW). An NDxxDxxxD motif is present at residues 81–88 (DILDQDFD). Mg(2+) is bound by residues D84 and D88. Helical transmembrane passes span 99 to 121 (IASG…FILM), 131 to 148 (AWMI…IYPL), and 155 to 177 (WPQA…YTTG). Mg(2+) contacts are provided by D205 and D209. The DxxxD motif lies at 205–209 (DKKDD). Positions 205 to 209 (DKKDD) match the YxxxK motif. 3 consecutive transmembrane segments (helical) span residues 227-247 (PVLS…GILN), 250-270 (ELPY…TQLW), and 293-313 (AIVW…GAIM).

This sequence belongs to the UbiA prenyltransferase family. The cofactor is Mg(2+).

The protein resides in the membrane. The enzyme catalyses hydroquinone + (2E)-geranyl diphosphate = (2E)-geranylhydroquinone + diphosphate. It participates in secondary metabolite biosynthesis; terpenoid biosynthesis. Prenyltransferase; part of the gene cluster that mediates the biosynthesis of clavilactone A, a meroterpenoid that features a unique benzo-fused ten-membered carbocyclic ring unit with an alpha,beta-epoxy-gamma-lactone moiety, forming an intriguing 10/5/3 tricyclic nested skeleton. ClaR, ClaS and ClaT are sufficient to produce clavilactone A. Within the pathway, claS acts as an atypical UbiA prenyltransferase that transfers geranyl pyrophosphate (GPP) to hydroquinone (HYQ) instead of p-hydroxybenzoic acid (PHB), producing the first intermediate geranylhydroquinone. The cytochrome P450 monooxygenase claR then catalyzes the diradical coupling reaction between the intramolecular hydroquinone and allyl moieties to form the benzo-fused ten-membered carbocyclic ring unit of wigantol. Finally the cytochrome P450 monooxygenase claT exquisitely and stereoselectively assembles the alpha,beta-epoxy-gamma-lactone moiety, producing clavilactone A via arnebinol A. The protein is UbiA prenyltransferase claS of Ampulloclitocybe clavipes (Club foot).